A 371-amino-acid polypeptide reads, in one-letter code: Alanine dehydrogenase (371 aa).

Residues arginine 15 and lysine 74 each contribute to the substrate site. The active-site Proton donor/acceptor is the histidine 95. Residues serine 133, 177-178, aspartate 197, serine 219, 238-239, 266-269, and 298-301 each bind NAD(+); these read QA, VL, IAID, and VANM. The active-site Proton donor/acceptor is aspartate 269.

It belongs to the AlaDH/PNT family. As to quaternary structure, homohexamer. Trimer of dimer.

It carries out the reaction L-alanine + NAD(+) + H2O = pyruvate + NH4(+) + NADH + H(+). Its pathway is amino-acid degradation; L-alanine degradation via dehydrogenase pathway; NH(3) and pyruvate from L-alanine: step 1/1. Catalyzes the reversible reductive amination of pyruvate to L-alanine. May play a role in cell wall synthesis as L-alanine is an important constituent of the peptidoglycan layer. This is Alanine dehydrogenase (ald) from Staphylococcus epidermidis (strain ATCC 35984 / DSM 28319 / BCRC 17069 / CCUG 31568 / BM 3577 / RP62A).